The sequence spans 279 residues: Urease accessory protein UreD (279 aa).

Belongs to the UreD family. In terms of assembly, ureD, UreF and UreG form a complex that acts as a GTP-hydrolysis-dependent molecular chaperone, activating the urease apoprotein by helping to assemble the nickel containing metallocenter of UreC. The UreE protein probably delivers the nickel.

It localises to the cytoplasm. Its function is as follows. Required for maturation of urease via the functional incorporation of the urease nickel metallocenter. This Brucella suis (strain ATCC 23445 / NCTC 10510) protein is Urease accessory protein UreD.